The chain runs to 214 residues: Pyridoxine/pyridoxamine 5'-phosphate oxidase (214 aa).

Residues 9 to 12 and Lys-67 contribute to the substrate site; that span reads RREY. Residues 62 to 67, 77 to 78, Arg-83, Lys-84, and Gln-106 each bind FMN; these read RTVLLK and YS. Substrate contacts are provided by Tyr-124, Arg-128, and Ser-132. FMN is bound by residues 141-142 and Trp-186; that span reads QS. 192 to 194 contributes to the substrate binding site; that stretch reads RLH. Arg-196 contributes to the FMN binding site.

Belongs to the pyridoxamine 5'-phosphate oxidase family. Homodimer. Requires FMN as cofactor.

The catalysed reaction is pyridoxamine 5'-phosphate + O2 + H2O = pyridoxal 5'-phosphate + H2O2 + NH4(+). The enzyme catalyses pyridoxine 5'-phosphate + O2 = pyridoxal 5'-phosphate + H2O2. It functions in the pathway cofactor metabolism; pyridoxal 5'-phosphate salvage; pyridoxal 5'-phosphate from pyridoxamine 5'-phosphate: step 1/1. Its pathway is cofactor metabolism; pyridoxal 5'-phosphate salvage; pyridoxal 5'-phosphate from pyridoxine 5'-phosphate: step 1/1. Functionally, catalyzes the oxidation of either pyridoxine 5'-phosphate (PNP) or pyridoxamine 5'-phosphate (PMP) into pyridoxal 5'-phosphate (PLP). The chain is Pyridoxine/pyridoxamine 5'-phosphate oxidase from Porphyromonas gingivalis (strain ATCC 33277 / DSM 20709 / CIP 103683 / JCM 12257 / NCTC 11834 / 2561).